We begin with the raw amino-acid sequence, 232 residues long: Imidazole glycerol phosphate synthase subunit HisF (232 aa).

Active-site residues include Asp-11 and Asp-130.

This sequence belongs to the HisA/HisF family. In terms of assembly, heterodimer of HisH and HisF.

It localises to the cytoplasm. The catalysed reaction is 5-[(5-phospho-1-deoxy-D-ribulos-1-ylimino)methylamino]-1-(5-phospho-beta-D-ribosyl)imidazole-4-carboxamide + L-glutamine = D-erythro-1-(imidazol-4-yl)glycerol 3-phosphate + 5-amino-1-(5-phospho-beta-D-ribosyl)imidazole-4-carboxamide + L-glutamate + H(+). Its pathway is amino-acid biosynthesis; L-histidine biosynthesis; L-histidine from 5-phospho-alpha-D-ribose 1-diphosphate: step 5/9. IGPS catalyzes the conversion of PRFAR and glutamine to IGP, AICAR and glutamate. The HisF subunit catalyzes the cyclization activity that produces IGP and AICAR from PRFAR using the ammonia provided by the HisH subunit. In Listeria monocytogenes serotype 4a (strain HCC23), this protein is Imidazole glycerol phosphate synthase subunit HisF.